The chain runs to 312 residues: Telomere-binding protein OPG077 (312 aa).

This sequence belongs to the orthopoxvirus OPG077 family.

It localises to the virion. Its function is as follows. DNA-binding protein which binds to the hairpin form of the viral telomeric sequence. Required for the production of mature virions (MV). The sequence is that of Telomere-binding protein OPG077 (OPG077) from Vaccinia virus (strain L-IVP) (VACV).